Reading from the N-terminus, the 449-residue chain is MRFAYGRLPWRRGAVLGSALLVLVTAPAASTATERSGPAPARSVILLIGDGMGDAEITAARNYSVGAAGRLAMDTLDASGRRTTYAVDERGRPVYVTDSAAGATAWATGRRTVNGRVSKSHDTDRPMPTLLELARDRGYATGSVTTASVADATPAALTAHVTDRSCKGPADMAACPADTRAGGGEGSIAEQTVAARPDVLLGGGADHFAQTVTDGPFRGRTVTQQARAAGYQVVRDRTQLAAARPGRPVLGLFAPEYVPVEWTGPPAAPGGTAPQRCATRNPGRPAGTPDLAESTRAALDLLTARAHHRGAPGRGFFLQVEGASIDDRAHEADPCGQLGETLAFDRAVAAALDHAERHPRTLVIVTADHGHATQILPHDARPAGLSATLVTDEGGVMQLGYGTALPGETQEHTGVPVPVAARGPLADRVRGVQDNTSLFGTVTAALGLR.

Residues 1 to 32 (MRFAYGRLPWRRGAVLGSALLVLVTAPAASTA) form the signal peptide. A Mg(2+)-binding site is contributed by Asp50. Residue Asp50 coordinates Zn(2+). Ser99 functions as the Phosphoserine intermediate in the catalytic mechanism. Mg(2+)-binding residues include Asp151 and Thr153. The disordered stretch occupies residues 268–290 (APGGTAPQRCATRNPGRPAGTPD). A Mg(2+)-binding site is contributed by Glu321. 5 residues coordinate Zn(2+): Asp326, His330, Asp368, His369, and His412.

The protein belongs to the alkaline phosphatase family. The cofactor is Mg(2+). Zn(2+) is required as a cofactor.

It is found in the secreted. It catalyses the reaction streptomycin 6-phosphate + H2O = streptomycin + phosphate. It participates in antibiotic biosynthesis; streptomycin biosynthesis. Its function is as follows. Specifically cleaves both streptomycin-6-phosphate and, more slowly, streptomycin-3''-phosphate during the biosynthesis of streptomycin. This chain is Streptomycin-6-phosphate phosphatase (strK), found in Streptomyces griseus.